Reading from the N-terminus, the 463-residue chain is Abscisic acid 8'-hydroxylase 3 (463 aa).

A helical membrane pass occupies residues 6–26; it reads LFLTLSAAALFLCLLRFIAGV. C411 contributes to the heme binding site.

It belongs to the cytochrome P450 family. It depends on heme as a cofactor. As to expression, mainly expressed in flower buds, flowers, rosette leaves and roots. Lower expression in mature siliques and inflorescence stems. Not expressed in dry seeds.

It is found in the membrane. It carries out the reaction 2-cis-(+)-abscisate + reduced [NADPH--hemoprotein reductase] + O2 = (+)-8'-hydroxyabscisate + oxidized [NADPH--hemoprotein reductase] + H2O + H(+). It participates in plant hormone degradation; abscisic acid degradation. With respect to regulation, inhibited by tetcyclcis, but not by metyrapone. In terms of biological role, involved in the oxidative degradation of abscisic acid, but not in the isomerization of the produced 8'-hydroxyabscisic acid (8'-OH-ABA) to (-)-phaseic acid (PA). Involved in the control of postgermination growth. In Arabidopsis thaliana (Mouse-ear cress), this protein is Abscisic acid 8'-hydroxylase 3 (CYP707A3).